The following is a 272-amino-acid chain: MADS-box transcription factor 58 (272 aa).

The disordered stretch occupies residues 1–41 (MHIYKEQEAEPSTGLMMPEPAPVASPGSGGSGGSGSVGAEK). Residues 27 to 36 (GSGGSGGSGS) are compositionally biased toward gly residues. The 61-residue stretch at 43-103 (GSRGKIEIKR…GRLYEYSNNS (61 aa)) folds into the MADS-box domain. Positions 129 to 219 (AQHYQQEAAK…KSKVAESERG (91 aa)) constitute a K-box domain.

As to expression, expressed in the lodicule, stamen carpel and ovule primordia.

It localises to the nucleus. Probable transcription factor involved in the development of floral organs. Acts as a C-class protein in association with MADS3. Involved in the control of lodicule number (whorl 2), stamen specification (whorl 3), floral meristem determinacy and regulation of the carpel morphogenesis (whorl 4). Plays a more predominant role in floral meristem determinacy than MADS3. The polypeptide is MADS-box transcription factor 58 (MADS58) (Oryza sativa subsp. japonica (Rice)).